Reading from the N-terminus, the 276-residue chain is MAD2L1-binding protein (276 aa).

The span at 1-10 (MAASGEEDMS) shows a compositional bias: acidic residues. The tract at residues 1–30 (MAASGEEDMSELSPAAAPNLDWYEKPEETH) is disordered. The interaction with MAD2L1 stretch occupies residues 49-81 (PAEPFCPRDLVPVVFPGPVSQEDCCQFTCELLK).

It belongs to the MAD2L1BP family. In terms of assembly, interacts with MAD2L1.

Its subcellular location is the nucleus. The protein resides in the nucleoplasm. It localises to the cytoplasm. It is found in the cytoskeleton. The protein localises to the spindle. May function to silence the spindle checkpoint and allow mitosis to proceed through anaphase by binding MAD2L1 after it has become dissociated from the MAD2L1-CDC20 complex. The protein is MAD2L1-binding protein (Mad2l1bp) of Mus musculus (Mouse).